A 75-amino-acid polypeptide reads, in one-letter code: Conotoxin Vn5.5 (75 aa).

The signal sequence occupies residues 1-19; that stretch reads MLCLPVFIILLLLASPAAP. A propeptide spanning residues 20–59 is cleaved from the precursor; it reads NPLEKRIQSDLIRAALEDADMKTDEREIVNIIDSISDVAK. Gln-60 is subject to Pyrrolidone carboxylic acid.

This sequence belongs to the conotoxin T superfamily. Contains 2 disulfide bonds that can be either 'C1-C3, C2-C4' or 'C1-C4, C2-C3', since these disulfide connectivities have been observed for conotoxins with cysteine framework V (for examples, see AC P0DQQ7 and AC P81755). In terms of tissue distribution, expressed by the venom duct.

Its subcellular location is the secreted. The polypeptide is Conotoxin Vn5.5 (Conus ventricosus (Mediterranean cone)).